Reading from the N-terminus, the 635-residue chain is Threonine--tRNA ligase (635 aa).

Residues 1-58 (MIHVTCNQEAFELPEGASAMDLANKMKQSHCFVGALINDQEKDLSTTLQDGDTVLFLT) form the TGS domain. The interval 237–528 (DHRVLGTKLD…LIEHFKGRFP (292 aa)) is catalytic. Zn(2+) is bound by residues C328, H379, and H505.

Belongs to the class-II aminoacyl-tRNA synthetase family. As to quaternary structure, homodimer. Requires Zn(2+) as cofactor.

The protein localises to the cytoplasm. It carries out the reaction tRNA(Thr) + L-threonine + ATP = L-threonyl-tRNA(Thr) + AMP + diphosphate + H(+). Catalyzes the attachment of threonine to tRNA(Thr) in a two-step reaction: L-threonine is first activated by ATP to form Thr-AMP and then transferred to the acceptor end of tRNA(Thr). Also edits incorrectly charged L-seryl-tRNA(Thr). This is Threonine--tRNA ligase from Chlamydia trachomatis serovar L2b (strain UCH-1/proctitis).